The following is a 202-amino-acid chain: UPF0056 membrane protein PH0214 (202 aa).

6 consecutive transmembrane segments (helical) span residues 5-25 (ILSS…ILLV), 47-67 (IGFI…QDIF), 76-96 (VAGG…GGMV), 104-124 (ILAL…AAIT), 135-155 (IIVS…LMMI), and 174-194 (IIGL…AGGI).

This sequence belongs to the UPF0056 (MarC) family.

It is found in the cell membrane. The sequence is that of UPF0056 membrane protein PH0214 from Pyrococcus horikoshii (strain ATCC 700860 / DSM 12428 / JCM 9974 / NBRC 100139 / OT-3).